A 618-amino-acid polypeptide reads, in one-letter code: DNA mismatch repair protein MutL (618 aa).

Residues 367–378 (EPTAAREPATPR) are compositionally biased toward low complexity. The segment at 367-402 (EPTAAREPATPRYSGGASGGNGGRQTAGGWPHAQPG) is disordered. Gly residues predominate over residues 382–392 (GASGGNGGRQT).

Belongs to the DNA mismatch repair MutL/HexB family.

Its function is as follows. This protein is involved in the repair of mismatches in DNA. It is required for dam-dependent methyl-directed DNA mismatch repair. May act as a 'molecular matchmaker', a protein that promotes the formation of a stable complex between two or more DNA-binding proteins in an ATP-dependent manner without itself being part of a final effector complex. The chain is DNA mismatch repair protein MutL from Salmonella choleraesuis (strain SC-B67).